A 285-amino-acid polypeptide reads, in one-letter code: (3S)-malyl-CoA thioesterase (285 aa).

The substrate site is built by arginine 70 and glutamate 122. Residues glutamate 122 and aspartate 148 each contribute to the Mg(2+) site.

Belongs to the HpcH/HpaI aldolase family. Homodimer or homotrimer. It depends on Mg(2+) as a cofactor.

The enzyme catalyses (S)-malyl-CoA + H2O = (S)-malate + CoA + H(+). Catalyzes the hydrolysis of (3S)-malyl-CoA to (3S)-malate and free CoA. Inactive towards beta-methylmalyl-CoA and other CoA esters. This is (3S)-malyl-CoA thioesterase from Cereibacter sphaeroides (strain KD131 / KCTC 12085) (Rhodobacter sphaeroides).